The sequence spans 203 residues: Ribonuclease HII (203 aa).

Residues 18 to 203 (GHYAGVDEVG…SFRPVREALA (186 aa)) enclose the RNase H type-2 domain. The a divalent metal cation site is built by D24, E25, and D116.

It belongs to the RNase HII family. It depends on Mn(2+) as a cofactor. Mg(2+) is required as a cofactor.

It localises to the cytoplasm. It catalyses the reaction Endonucleolytic cleavage to 5'-phosphomonoester.. Endonuclease that specifically degrades the RNA of RNA-DNA hybrids. The polypeptide is Ribonuclease HII (Shewanella halifaxensis (strain HAW-EB4)).